Here is a 334-residue protein sequence, read N- to C-terminus: Putative binding protein YtlA (334 aa).

The N-terminal stretch at 1–23 (MNRWLRLGFACVGSIFLMFALAA) is a signal peptide. A lipid anchor (N-palmitoyl cysteine) is attached at cysteine 24. Cysteine 24 carries S-diacylglycerol cysteine lipidation.

This sequence belongs to the bacterial solute-binding protein SsuA/TauA family.

It localises to the cell membrane. In Bacillus subtilis (strain 168), this protein is Putative binding protein YtlA (ytlA).